We begin with the raw amino-acid sequence, 403 residues long: Acetate kinase (403 aa).

N8 is a binding site for Mg(2+). An ATP-binding site is contributed by K15. Residue R90 coordinates substrate. Residue D147 is the Proton donor/acceptor of the active site. Residues 207–211 (HLGSG), 282–284 (DLR), and 330–334 (GVGEN) contribute to the ATP site. E384 contributes to the Mg(2+) binding site.

The protein belongs to the acetokinase family. In terms of assembly, homodimer. The cofactor is Mg(2+). Mn(2+) is required as a cofactor.

Its subcellular location is the cytoplasm. The enzyme catalyses acetate + ATP = acetyl phosphate + ADP. Its pathway is metabolic intermediate biosynthesis; acetyl-CoA biosynthesis; acetyl-CoA from acetate: step 1/2. Its function is as follows. Catalyzes the formation of acetyl phosphate from acetate and ATP. Can also catalyze the reverse reaction. In Exiguobacterium sibiricum (strain DSM 17290 / CCUG 55495 / CIP 109462 / JCM 13490 / 255-15), this protein is Acetate kinase.